Reading from the N-terminus, the 163-residue chain is E3 ubiquitin-protein ligase ATL23 (163 aa).

The chain crosses the membrane as a helical span at residues 35–55 (ALLLPCVGMCIVFLIYLFLLW). Residues 104–146 (CAVCLEDIESGQSTRLVPGCNHGFHQLCADTWLSNHTVCPVCR) form an RING-type; atypical zinc finger.

It belongs to the RING-type zinc finger family. ATL subfamily.

Its subcellular location is the membrane. It carries out the reaction S-ubiquitinyl-[E2 ubiquitin-conjugating enzyme]-L-cysteine + [acceptor protein]-L-lysine = [E2 ubiquitin-conjugating enzyme]-L-cysteine + N(6)-ubiquitinyl-[acceptor protein]-L-lysine.. It functions in the pathway protein modification; protein ubiquitination. E3 ubiquitin-protein ligase able to catalyze polyubiquitination with ubiquitin-conjugating enzyme E2 UBC8, UBC10, UBC11, UBC28 and UBC29 in vitro. In Arabidopsis thaliana (Mouse-ear cress), this protein is E3 ubiquitin-protein ligase ATL23 (ATL23).